A 178-amino-acid chain; its full sequence is ATP-dependent protease subunit HslV (178 aa).

The active site involves Thr5. Positions 161, 164, and 167 each coordinate Na(+).

Belongs to the peptidase T1B family. HslV subfamily. As to quaternary structure, a double ring-shaped homohexamer of HslV is capped on each side by a ring-shaped HslU homohexamer. The assembly of the HslU/HslV complex is dependent on binding of ATP.

The protein localises to the cytoplasm. It catalyses the reaction ATP-dependent cleavage of peptide bonds with broad specificity.. With respect to regulation, allosterically activated by HslU binding. In terms of biological role, protease subunit of a proteasome-like degradation complex believed to be a general protein degrading machinery. The polypeptide is ATP-dependent protease subunit HslV (Nitratiruptor sp. (strain SB155-2)).